Here is a 147-residue protein sequence, read N- to C-terminus: 3-hydroxyacyl-[acyl-carrier-protein] dehydratase FabZ (147 aa).

His-51 is a catalytic residue.

This sequence belongs to the thioester dehydratase family. FabZ subfamily.

It is found in the cytoplasm. It carries out the reaction a (3R)-hydroxyacyl-[ACP] = a (2E)-enoyl-[ACP] + H2O. Involved in unsaturated fatty acids biosynthesis. Catalyzes the dehydration of short chain beta-hydroxyacyl-ACPs and long chain saturated and unsaturated beta-hydroxyacyl-ACPs. In Anaplasma marginale (strain Florida), this protein is 3-hydroxyacyl-[acyl-carrier-protein] dehydratase FabZ.